Here is a 300-residue protein sequence, read N- to C-terminus: MSYRELVVELAREHAEALSDALLDLGALSVSVEDADADTPDEQPLFGEPGLVPDRTAWQHSRVVALLSADHEPAVLLAAAANEIGLAETPKFVVREVEEQDWVRLTQSQFEPIPIGERIWVVPSWHDAPDPDALVLELDPGLAFGTGSHPTTRLCMEWLEQSVKPGQSVLDYGCGSGILAILAKKCGANPVIGIDIDPQAVESARQNSERNRAEVTYGLPDACPEGEFDIVVANILSNPLKLMASMLASKVKPGGRIALSGVLARQADEVAAVYARYVDISVWREHEGWVCLAGTRRESH.

Residues Thr152, Gly173, Asp195, and Asn234 each contribute to the S-adenosyl-L-methionine site.

The protein belongs to the methyltransferase superfamily. PrmA family.

It is found in the cytoplasm. The enzyme catalyses L-lysyl-[protein] + 3 S-adenosyl-L-methionine = N(6),N(6),N(6)-trimethyl-L-lysyl-[protein] + 3 S-adenosyl-L-homocysteine + 3 H(+). Functionally, methylates ribosomal protein L11. The sequence is that of Ribosomal protein L11 methyltransferase from Burkholderia orbicola (strain MC0-3).